The following is a 232-amino-acid chain: MAPPPSSTSIQVESIVFPPSVKPPGATTTLFLGGAGVRGMEIQGNFVKFTGIGVYLEDKAIPSLAVKWKGKTAAELTDSVQFYRDIVTGPFEKFSQVTMILPLTGKQYSEKVSEMCIGVWKAQGTYTDADTATIEKFLEVFKDENFLPGSSILFTTSPTGSLTISFSKDGNIPEAATVVLENRKLAQTVIESVIGEHGVSPEAKQSLASRLSDFMTQFDEKATANVESQIGL.

2 residues coordinate substrate: Thr50 and Ser192.

It belongs to the chalcone isomerase family.

It catalyses the reaction a chalcone = a flavanone.. It functions in the pathway secondary metabolite biosynthesis; flavonoid biosynthesis. In terms of biological role, catalyzes the intramolecular cyclization of bicyclic chalcones into tricyclic (S)-flavanones. Responsible for the isomerization of 4,2',4',6'-tetrahydroxychalcone (also termed chalcone) into naringenin. In Saussurea medusa (Saw-wort), this protein is Chalcone--flavanone isomerase (CHI).